The sequence spans 233 residues: MSACQTPLIVALDFPTREAALKLADQLDPALCRVKVGKELFTSSASGIVETLCDKGFEVFLDLKFHDIPNTTAMAVKAAAEMGVWMVNVHCSGGLRMMAACREELAKRSGPQPLLIGVTVLTSMEREDLAGIGLDVDPQEQVLRLAALAQKAGMDGLVCSALEAPALKAAHPSLQLVTPGIRPAGSAQDDQRRILTPRQALDAGSDYLVIGRPISQAADPAQALAAVVAEIRG.

Residues D13, K35, 62-71, T122, R182, Q191, G211, and R212 contribute to the substrate site; that span reads DLKFHDIPNT. K64 (proton donor) is an active-site residue.

This sequence belongs to the OMP decarboxylase family. Type 1 subfamily. As to quaternary structure, homodimer.

It catalyses the reaction orotidine 5'-phosphate + H(+) = UMP + CO2. It participates in pyrimidine metabolism; UMP biosynthesis via de novo pathway; UMP from orotate: step 2/2. Its function is as follows. Catalyzes the decarboxylation of orotidine 5'-monophosphate (OMP) to uridine 5'-monophosphate (UMP). The polypeptide is Orotidine 5'-phosphate decarboxylase (Pseudomonas putida (strain GB-1)).